The following is a 220-amino-acid chain: Putative vesicle-associated membrane protein 726 (220 aa).

The Cytoplasmic segment spans residues 1-196 (MGQQSLIYSF…LWFENMKIKL (196 aa)). The Longin domain occupies 10–114 (FVARGTVILA…SLNKEFGSKL (105 aa)). In terms of domain architecture, v-SNARE coiled-coil homology spans 130–190 (KLSKVKAQVT…TKMKRKLWFE (61 aa)). The helical; Anchor for type IV membrane protein transmembrane segment at 197–217 (IVFGIIVALILIIILSVCHGF) threads the bilayer. Residues 218–220 (KCT) are Vesicular-facing.

This sequence belongs to the synaptobrevin family. As to expression, expressed in flowers, leaves, stems and roots.

It is found in the cell membrane. Its subcellular location is the early endosome membrane. Involved in the targeting and/or fusion of transport vesicles to their target membrane. The chain is Putative vesicle-associated membrane protein 726 (VAMP726) from Arabidopsis thaliana (Mouse-ear cress).